The following is a 349-amino-acid chain: Green-sensitive opsin-3 (349 aa).

Residues 1-36 (MNGTEGNNFYIPMSNRTGLVRSPYEYPQYYLAEPWQ) are Extracellular-facing. N-linked (GlcNAc...) asparagine glycosylation is found at Asn-2 and Asn-15. A helical membrane pass occupies residues 37 to 61 (FKLLAVYMFFLMCFGFPINGLTLVV). The Cytoplasmic portion of the chain corresponds to 62 to 73 (TAQHKKLRQPLN). Residues 74–99 (FILVNLAVAGTIMVCFGFTVTFYTAI) traverse the membrane as a helical segment. Topologically, residues 100–113 (NGYFVLGPTGCAIE) are extracellular. Cys-110 and Cys-187 are disulfide-bonded. The helical transmembrane segment at 114–133 (GFMATLGGQISLWSLVVLAI) threads the bilayer. The Cytoplasmic portion of the chain corresponds to 134–152 (ERYIVVCKPMGSFKFSSNH). Residues 153-176 (AFAGIGFTWIMALSCAAPPLVGWS) traverse the membrane as a helical segment. Residues 177–202 (RYIPEGMQCSCGPDYYTLNPDYNNES) are Extracellular-facing. N-linked (GlcNAc...) asparagine glycosylation occurs at Asn-200. The helical transmembrane segment at 203 to 230 (YVLYMFCCHFIFPVTTIFFTYGRLVCTV) threads the bilayer. At 231 to 252 (KAAAAQQQESESTQKAEREVTR) the chain is on the cytoplasmic side. The helical transmembrane segment at 253–276 (MVILMVLGFLVAWTPYASVAAWIF) threads the bilayer. Over 277 to 284 (FNRGAAFS) the chain is Extracellular. A helical transmembrane segment spans residues 285–309 (AQFMAVPAFFSKSSSIFNPIIYVLL). At Lys-296 the chain carries N6-(retinylidene)lysine. Over 310–349 (NKQFRNCMLTTLFCGKNPLGDDESSTVSTSKTEVSSVSPA) the chain is Cytoplasmic. The interval 329 to 349 (GDDESSTVSTSKTEVSSVSPA) is disordered. The segment covering 334 to 349 (STVSTSKTEVSSVSPA) has biased composition (low complexity).

It belongs to the G-protein coupled receptor 1 family. Opsin subfamily. Post-translationally, phosphorylated on some or all of the serine and threonine residues present in the C-terminal region.

It localises to the membrane. Functionally, visual pigments are the light-absorbing molecules that mediate vision. They consist of an apoprotein, opsin, covalently linked to cis-retinal. This chain is Green-sensitive opsin-3 (opn1mw3), found in Danio rerio (Zebrafish).